Consider the following 692-residue polypeptide: Polyphosphate kinase (692 aa).

Asn-57 lines the ATP pocket. 2 residues coordinate Mg(2+): Arg-383 and Arg-413. His-443 serves as the catalytic Phosphohistidine intermediate. Residues Tyr-476, Arg-572, and His-600 each coordinate ATP.

This sequence belongs to the polyphosphate kinase 1 (PPK1) family. Mg(2+) serves as cofactor. Post-translationally, an intermediate of this reaction is the autophosphorylated ppk in which a phosphate is covalently linked to a histidine residue through a N-P bond.

It carries out the reaction [phosphate](n) + ATP = [phosphate](n+1) + ADP. In terms of biological role, catalyzes the reversible transfer of the terminal phosphate of ATP to form a long-chain polyphosphate (polyP). This chain is Polyphosphate kinase, found in Acinetobacter baumannii (strain AYE).